We begin with the raw amino-acid sequence, 119 residues long: MCIILHSCTARLPQAQNLQIELKQDQVQASFKSNEKKNSIFIKLVSEKPMLINRRVESSNLLHSNMGGFLAKKTNSNSKIRNSFTSKCTSLMKQQHARLCIIRLCATMLLRSYTDHDDY.

The segment at 83–114 (SFTSKCTSLMKQQHARLCIIRLCATMLLRSYT) is required for DVL/RTFL small polypeptide activity. Residues 96–113 (HARLCIIRLCATMLLRSY) form a helical membrane-spanning segment.

Belongs to the DVL/RTFL small polypeptides family.

It localises to the cell membrane. Functionally, small polypeptide acting as a regulatory molecule which coordinates cellular responses required for differentiation, growth and development, probably by restricting polar cell proliferation in lateral organs and coordinating socket cell recruitment and differentiation at trichome sites. This is Small polypeptide DEVIL 24 from Arabidopsis thaliana (Mouse-ear cress).